Consider the following 378-residue polypeptide: Glutamate 5-kinase (378 aa).

An ATP-binding site is contributed by lysine 15. Positions 56, 143, and 155 each coordinate substrate. An ATP-binding site is contributed by 175–176 (SD). In terms of domain architecture, PUA spans 281–358 (KGTLTIDAGA…PDVAVILGIS (78 aa)).

This sequence belongs to the glutamate 5-kinase family.

Its subcellular location is the cytoplasm. It catalyses the reaction L-glutamate + ATP = L-glutamyl 5-phosphate + ADP. Its pathway is amino-acid biosynthesis; L-proline biosynthesis; L-glutamate 5-semialdehyde from L-glutamate: step 1/2. In terms of biological role, catalyzes the transfer of a phosphate group to glutamate to form L-glutamate 5-phosphate. The sequence is that of Glutamate 5-kinase from Bradyrhizobium sp. (strain BTAi1 / ATCC BAA-1182).